We begin with the raw amino-acid sequence, 202 residues long: GTP cyclohydrolase-2 (202 aa).

GTP is bound at residue 49–53; sequence RIHSE. Zn(2+)-binding residues include cysteine 54, cysteine 65, and cysteine 67. Residues glutamine 70, 92 to 94, and threonine 114 each bind GTP; that span reads EGR. The Proton acceptor role is filled by aspartate 126. Arginine 128 (nucleophile) is an active-site residue. GTP contacts are provided by threonine 149 and lysine 154.

It belongs to the GTP cyclohydrolase II family. It depends on Zn(2+) as a cofactor.

It catalyses the reaction GTP + 4 H2O = 2,5-diamino-6-hydroxy-4-(5-phosphoribosylamino)-pyrimidine + formate + 2 phosphate + 3 H(+). It participates in cofactor biosynthesis; riboflavin biosynthesis; 5-amino-6-(D-ribitylamino)uracil from GTP: step 1/4. In terms of biological role, catalyzes the conversion of GTP to 2,5-diamino-6-ribosylamino-4(3H)-pyrimidinone 5'-phosphate (DARP), formate and pyrophosphate. This chain is GTP cyclohydrolase-2, found in Shewanella frigidimarina (strain NCIMB 400).